The primary structure comprises 150 residues: Large ribosomal subunit protein uL11 (150 aa).

This sequence belongs to the universal ribosomal protein uL11 family. As to quaternary structure, part of the ribosomal stalk of the 50S ribosomal subunit. Interacts with L10 and the large rRNA to form the base of the stalk. L10 forms an elongated spine to which L12 dimers bind in a sequential fashion forming a multimeric L10(L12)X complex. Post-translationally, one or more lysine residues are methylated.

Its function is as follows. Forms part of the ribosomal stalk which helps the ribosome interact with GTP-bound translation factors. This Cereibacter sphaeroides (strain KD131 / KCTC 12085) (Rhodobacter sphaeroides) protein is Large ribosomal subunit protein uL11.